The chain runs to 445 residues: Selenocysteine lyase (445 aa).

Position 1 is an N-acetylmethionine (M1). Residues 1–28 are disordered; that stretch reads MEAAVAPGRDAPAPAASQPSGCGKHNSP. A Phosphoserine modification is found at S129. Position 259 is an N6-(pyridoxal phosphate)lysine (K259). Catalysis depends on C388, which acts as the S-selanylcysteine intermediate.

The protein belongs to the class-V pyridoxal-phosphate-dependent aminotransferase family. As to quaternary structure, homodimer. The cofactor is pyridoxal 5'-phosphate.

The protein localises to the cytoplasm. It is found in the cytosol. It catalyses the reaction L-selenocysteine + AH2 = hydrogenselenide + L-alanine + A + H(+). Catalyzes the decomposition of L-selenocysteine to L-alanine and elemental selenium. The chain is Selenocysteine lyase (SCLY) from Homo sapiens (Human).